The chain runs to 742 residues: Photosystem I P700 chlorophyll a apoprotein A2 (742 aa).

The next 8 membrane-spanning stretches (helical) occupy residues 46–69 (LFST…FHIA), 135–158 (LFQA…LHLQ), 175–199 (LNHH…HVAI), 273–291 (IAHH…GHMY), 336–359 (LHFQ…QHMG), 375–401 (SALY…IFFV), 423–445 (ALIS…IYVH), and 525–543 (FLVH…LILI). [4Fe-4S] cluster-binding residues include C567 and C576. 2 consecutive transmembrane segments (helical) span residues 583–604 (AMYL…YWHW) and 651–673 (LSVW…MFLI). Divinyl chlorophyll a is bound by residues H662, M670, and Y678. W679 contributes to the phylloquinone binding site. Residues 715 to 735 (LVGLAHFTIGNILTFGAFVIA) form a helical membrane-spanning segment.

It belongs to the PsaA/PsaB family. The PsaA/B heterodimer binds the P700 divinyl chlorophyll special pair and subsequent electron acceptors. PSI consists of a core antenna complex that captures photons, and an electron transfer chain that converts photonic excitation into a charge separation. The cyanobacterial PSI reaction center is composed of one copy each of PsaA,B,C,D,E,F,I,J,K,L,M and X, and forms trimeric complexes. It depends on PSI electron transfer chain: 5 divinyl chlorophyll a, 1 divinyl chlorophyll a', 2 phylloquinones and 3 4Fe-4S clusters. PSI core antenna: 90 divinyl chlorophyll a, 22 carotenoids, 3 phospholipids and 1 galactolipid. P700 is a divinyl chlorophyll a/divinyl chlorophyll a' dimer, A0 is one or more divinyl chlorophyll a, A1 is one or both phylloquinones and FX is a shared 4Fe-4S iron-sulfur center. as a cofactor.

It localises to the cellular thylakoid membrane. The enzyme catalyses reduced [plastocyanin] + hnu + oxidized [2Fe-2S]-[ferredoxin] = oxidized [plastocyanin] + reduced [2Fe-2S]-[ferredoxin]. PsaA and PsaB bind P700, the primary electron donor of photosystem I (PSI), as well as the electron acceptors A0, A1 and FX. PSI is a plastocyanin/cytochrome c6-ferredoxin oxidoreductase, converting photonic excitation into a charge separation, which transfers an electron from the donor P700 chlorophyll pair to the spectroscopically characterized acceptors A0, A1, FX, FA and FB in turn. Oxidized P700 is reduced on the lumenal side of the thylakoid membrane by plastocyanin or cytochrome c6. This chain is Photosystem I P700 chlorophyll a apoprotein A2, found in Prochlorococcus marinus subsp. pastoris (strain CCMP1986 / NIES-2087 / MED4).